The following is a 135-amino-acid chain: Envelope glycoprotein N (135 aa).

An N-terminal signal peptide occupies residues 1-19; that stretch reads MEWNTLVLGLLVLSVVASS. Topologically, residues 20 to 98 are virion surface; the sequence is NNTSTASTPR…SHMYELSLSS (79 aa). A compositionally biased stretch (low complexity) spans 21 to 68; the sequence is NTSTASTPRPSSSTHASTTVKATTVATTSTTTATSTSSTTSAKPGSTT. Residues 21-73 are disordered; that stretch reads NTSTASTPRPSSSTHASTTVKATTVATTSTTTATSTSSTTSAKPGSTTHDPNV. A helical membrane pass occupies residues 99–119; the sequence is FAAWWTMLNALILMGAFCIVL. At 120 to 135 the chain is on the intravirion side; it reads RHCCFQNFTATTTKGY.

It belongs to the herpesviridae glycoprotein N family. In terms of assembly, interacts (via N-terminus) with gM (via N-terminus). The gM-gN heterodimer forms the gCII complex. Post-translationally, O-glycosylated.

The protein resides in the virion membrane. Its subcellular location is the host membrane. It is found in the host Golgi apparatus. The protein localises to the host trans-Golgi network. In terms of biological role, envelope glycoprotein necessary for proper maturation of gM and modulation of its membrane fusion activity. Also plays a critical role in virion morphogenesis. This is Envelope glycoprotein N from Homo sapiens (Human).